Reading from the N-terminus, the 253-residue chain is Phosphate import ATP-binding protein PstB (253 aa).

Residues 1-249 form the ABC transporter domain; it reads MKLMDVRVSG…PRHELTKKFL (249 aa). ATP is bound at residue 38-45; the sequence is GPSGSGKS.

This sequence belongs to the ABC transporter superfamily. Phosphate importer (TC 3.A.1.7) family. The complex is composed of two ATP-binding proteins (PstB), two transmembrane proteins (PstC and PstA) and a solute-binding protein (PstS).

It localises to the cell membrane. It carries out the reaction phosphate(out) + ATP + H2O = ADP + 2 phosphate(in) + H(+). Functionally, part of the ABC transporter complex PstSACB involved in phosphate import. Responsible for energy coupling to the transport system. The sequence is that of Phosphate import ATP-binding protein PstB from Aeropyrum pernix (strain ATCC 700893 / DSM 11879 / JCM 9820 / NBRC 100138 / K1).